Reading from the N-terminus, the 230-residue chain is RNA chaperone ProQ (230 aa).

Over residues 105–125 (EAKARVQAQREQHQAKKREAG) the composition is skewed to basic and acidic residues. Residues 105 to 182 (EAKARVQAQR…EQRKPVTDTT (78 aa)) form a disordered region. Positions 154-167 (PSRPQAARPASAPR) are enriched in low complexity. Over residues 168-178 (AESRVEQRKPV) the composition is skewed to basic and acidic residues.

The protein belongs to the ProQ family.

The protein resides in the cytoplasm. Its function is as follows. RNA chaperone with significant RNA binding, RNA strand exchange and RNA duplexing activities. May regulate ProP activity through an RNA-based, post-transcriptional mechanism. The sequence is that of RNA chaperone ProQ from Erwinia tasmaniensis (strain DSM 17950 / CFBP 7177 / CIP 109463 / NCPPB 4357 / Et1/99).